A 542-amino-acid polypeptide reads, in one-letter code: Nuclear hormone receptor family member nhr-35 (542 aa).

A DNA-binding region (nuclear receptor) is located at residues 74–149; sequence NSICHICSDV…SGMRDDQVQS (76 aa). 2 consecutive NR C4-type zinc fingers follow at residues 77 to 97 and 113 to 137; these read CHICSDVATGRHYGAIACNGC and CRFESKCEIDKHNRAVCRYCRFMKC. Residues 186–438 form the NR LBD domain; that stretch reads EYDQLLESLL…VLMEELILAE (253 aa). The disordered stretch occupies residues 445–487; the sequence is RQDQTPCSIMNDTPSGSQDMCSPCPEDLLRTSTSSNSPTNSSL. The span at 448–464 shows a compositional bias: polar residues; that stretch reads QTPCSIMNDTPSGSQDM. The segment covering 475–487 has biased composition (low complexity); that stretch reads TSTSSNSPTNSSL.

Belongs to the nuclear hormone receptor family.

It is found in the nucleus. Its function is as follows. Orphan nuclear receptor. The polypeptide is Nuclear hormone receptor family member nhr-35 (nhr-35) (Caenorhabditis elegans).